The primary structure comprises 313 residues: tRNA dimethylallyltransferase (313 aa).

Residue 11 to 18 (GPTASGKT) coordinates ATP. Substrate is bound at residue 13 to 18 (TASGKT). Interaction with substrate tRNA stretches follow at residues 36-39 (DSRQ) and 160-164 (QRLIR).

The protein belongs to the IPP transferase family. In terms of assembly, monomer. Mg(2+) is required as a cofactor.

The enzyme catalyses adenosine(37) in tRNA + dimethylallyl diphosphate = N(6)-dimethylallyladenosine(37) in tRNA + diphosphate. Its function is as follows. Catalyzes the transfer of a dimethylallyl group onto the adenine at position 37 in tRNAs that read codons beginning with uridine, leading to the formation of N6-(dimethylallyl)adenosine (i(6)A). The polypeptide is tRNA dimethylallyltransferase (Chlorobaculum parvum (strain DSM 263 / NCIMB 8327) (Chlorobium vibrioforme subsp. thiosulfatophilum)).